Reading from the N-terminus, the 137-residue chain is Small ribosomal subunit protein uS9 (137 aa).

Residues 100–137 (ENRPPLKSEGYLTRDPRAKERKKYGLHKARKAPQYSKR) form a disordered region. Over residues 118–137 (KERKKYGLHKARKAPQYSKR) the composition is skewed to basic residues.

It belongs to the universal ribosomal protein uS9 family.

The polypeptide is Small ribosomal subunit protein uS9 (Microcystis aeruginosa (strain NIES-843 / IAM M-2473)).